We begin with the raw amino-acid sequence, 104 residues long: Cell division protein FtsL (104 aa).

Over 1 to 19 (MSTPNTHLLCLIATDLRKH) the chain is Cytoplasmic. A helical transmembrane segment spans residues 20 to 39 (FFAVLVGMLIVCSAIYNVYT). Over 40 to 104 (THKTRGLVTQ…KKNSVLVELR (65 aa)) the chain is Periplasmic.

Belongs to the FtsL family. In terms of assembly, part of a complex composed of FtsB, FtsL and FtsQ.

The protein localises to the cell inner membrane. Functionally, essential cell division protein. May link together the upstream cell division proteins, which are predominantly cytoplasmic, with the downstream cell division proteins, which are predominantly periplasmic. The chain is Cell division protein FtsL from Psychromonas ingrahamii (strain DSM 17664 / CCUG 51855 / 37).